Reading from the N-terminus, the 173-residue chain is Placenta-specific protein 1 (173 aa).

The signal sequence occupies residues 1 to 23 (MKLIKFLGGVVFFTLMFSGYSEQ).

The protein belongs to the PLAC1 family.

The protein localises to the secreted. In terms of biological role, may play a role in placental development. This is Placenta-specific protein 1 from Rattus norvegicus (Rat).